A 1097-amino-acid polypeptide reads, in one-letter code: RecBCD enzyme subunit RecC (1097 aa).

The protein belongs to the RecC family. In terms of assembly, heterotrimer of RecB, RecC and RecD. All subunits contribute to DNA-binding.

A helicase/nuclease that prepares dsDNA breaks (DSB) for recombinational DNA repair. Binds to DSBs and unwinds DNA via a highly rapid and processive ATP-dependent bidirectional helicase activity. Holoenzyme degrades any linearized DNA that is unable to undergo homologous recombination. In the holoenzyme this subunit recognizes the wild-type Chi sequence, and when added to isolated RecB increases its ATP-dependent helicase processivity. Unlike the case in E.coli, suppresses RecA-dependent homologous recombination, is instead required for single-strand annealing pathway repair of DSB. The polypeptide is RecBCD enzyme subunit RecC (Mycobacterium tuberculosis (strain ATCC 25618 / H37Rv)).